Here is a 196-residue protein sequence, read N- to C-terminus: ECF RNA polymerase sigma factor SigM (196 aa).

Positions 39–105 (LFRRHHRQLH…ACLDRLRRAK (67 aa)) are sigma-70 factor domain-2. The short motif at 63–66 (DALQ) is the Interaction with polymerase core subunit RpoC element. The segment at 130–181 (AVQRALMRLPVEQRAAVVAVDMQGYSIADTARMLGVAEGTVKSRCARARARL) is sigma-70 factor domain-4. The H-T-H motif DNA-binding region spans 156 to 175 (IADTARMLGVAEGTVKSRCA).

Belongs to the sigma-70 factor family. ECF subfamily. In terms of assembly, interacts transiently with the RNA polymerase catalytic core formed by RpoA, RpoB, RpoC and RpoZ (2 alpha, 1 beta, 1 beta' and 1 omega subunit) to form the RNA polymerase holoenzyme that can initiate transcription. Interacts (via sigma-70 factor domain 4) with anti-sigma-M factor RsmA.

Sigma factors are initiation factors that promote the attachment of RNA polymerase to specific initiation sites and are then released. Extracytoplasmic function (ECF) sigma factors are held in an inactive form by an anti-sigma factor until released by regulated intramembrane proteolysis. The sequence is that of ECF RNA polymerase sigma factor SigM (sigM) from Mycobacterium tuberculosis (strain ATCC 35801 / TMC 107 / Erdman).